Reading from the N-terminus, the 543-residue chain is Chaperonin GroEL 1 (543 aa).

ATP is bound by residues 29-32 (TLGP), 86-90 (DGTTT), Gly413, 479-481 (NAA), and Asp495. The segment at 524–543 (PEPKDAAPAGVGGGGGDFDY) is disordered. Over residues 533–543 (GVGGGGGDFDY) the composition is skewed to gly residues.

Belongs to the chaperonin (HSP60) family. As to quaternary structure, forms a cylinder of 14 subunits composed of two heptameric rings stacked back-to-back. Interacts with the co-chaperonin GroES.

The protein localises to the cytoplasm. It catalyses the reaction ATP + H2O + a folded polypeptide = ADP + phosphate + an unfolded polypeptide.. Functionally, together with its co-chaperonin GroES, plays an essential role in assisting protein folding. The GroEL-GroES system forms a nano-cage that allows encapsulation of the non-native substrate proteins and provides a physical environment optimized to promote and accelerate protein folding. The protein is Chaperonin GroEL 1 of Anabaena sp. (strain L31).